The chain runs to 363 residues: Putative type I specificity subunit S.MpnORF507P (363 aa).

The protein belongs to the type-I restriction system S methylase family. In terms of assembly, the methyltransferase is composed of M and S polypeptides.

The specificity (S) subunit of a type I methyltransferase (MTase); this subunit dictates DNA sequence specificity. The single R subunit has multiple frameshifts and is probably not expressed. This Mycoplasma pneumoniae (strain ATCC 29342 / M129 / Subtype 1) (Mycoplasmoides pneumoniae) protein is Putative type I specificity subunit S.MpnORF507P.